Reading from the N-terminus, the 220-residue chain is Fructose-6-phosphate aldolase 2 (220 aa).

K85 acts as the Schiff-base intermediate with substrate in catalysis.

This sequence belongs to the transaldolase family. Type 3A subfamily. Homodecamer.

It is found in the cytoplasm. The enzyme catalyses beta-D-fructose 6-phosphate = dihydroxyacetone + D-glyceraldehyde 3-phosphate. In terms of biological role, catalyzes the reversible formation of fructose 6-phosphate from dihydroxyacetone and D-glyceraldehyde 3-phosphate via an aldolization reaction. This chain is Fructose-6-phosphate aldolase 2 (fsaB), found in Escherichia coli O6:H1 (strain CFT073 / ATCC 700928 / UPEC).